We begin with the raw amino-acid sequence, 268 residues long: MSNLPRDLSDLPRNMAEEVLSRVPMTSLRRLRFTCKKWNTLSRCRSFAKKHLVCQAKVAAKKREYKVVMMMDFRVYLMRINLQNNVELCIKRERELLFPDASDQIYVRHVFHCDGLLLCIMKDNPRLVVCNPYSGQTRWIETTNNPQRLDAYSYALGYNSSTKSHKILSFGMMFDYVSSTSAEFKIYDFNSDSWRLAVLFQRMDTLQMEIWVTTKIEPNTVSWSSKFFLSVDMRELTGRYSMFSFSDASFFIDEEKKVAVVFDKGKKK.

The F-box domain maps to 5-51; it reads PRDLSDLPRNMAEEVLSRVPMTSLRRLRFTCKKWNTLSRCRSFAKKH.

The chain is Putative F-box protein At3g23420 from Arabidopsis thaliana (Mouse-ear cress).